The primary structure comprises 34 residues: MEVNILGLIATALFIIIPTSFLLILYVKTASQQN.

Residues 5-25 (ILGLIATALFIIIPTSFLLIL) traverse the membrane as a helical segment.

The protein belongs to the PsbM family. As to quaternary structure, PSII is composed of 1 copy each of membrane proteins PsbA, PsbB, PsbC, PsbD, PsbE, PsbF, PsbH, PsbI, PsbJ, PsbK, PsbL, PsbM, PsbT, PsbX, PsbY, PsbZ, Psb30/Ycf12, at least 3 peripheral proteins of the oxygen-evolving complex and a large number of cofactors. It forms dimeric complexes.

It is found in the plastid. The protein resides in the chloroplast thylakoid membrane. Functionally, one of the components of the core complex of photosystem II (PSII). PSII is a light-driven water:plastoquinone oxidoreductase that uses light energy to abstract electrons from H(2)O, generating O(2) and a proton gradient subsequently used for ATP formation. It consists of a core antenna complex that captures photons, and an electron transfer chain that converts photonic excitation into a charge separation. This subunit is found at the monomer-monomer interface. The sequence is that of Photosystem II reaction center protein M from Nephroselmis olivacea (Green alga).